Here is an 89-residue protein sequence, read N- to C-terminus: Large ribosomal subunit protein bL31B (89 aa).

It belongs to the bacterial ribosomal protein bL31 family. Type B subfamily. As to quaternary structure, part of the 50S ribosomal subunit.

This is Large ribosomal subunit protein bL31B from Haemophilus ducreyi (strain 35000HP / ATCC 700724).